The following is a 203-amino-acid chain: Orotate phosphoribosyltransferase (203 aa).

5-phospho-alpha-D-ribose 1-diphosphate is bound by residues R94, K98, H100, and 120-128; that span reads EDLISTGGS. S124 contributes to the orotate binding site.

It belongs to the purine/pyrimidine phosphoribosyltransferase family. PyrE subfamily. Homodimer. Mg(2+) serves as cofactor.

It carries out the reaction orotidine 5'-phosphate + diphosphate = orotate + 5-phospho-alpha-D-ribose 1-diphosphate. Its pathway is pyrimidine metabolism; UMP biosynthesis via de novo pathway; UMP from orotate: step 1/2. Its function is as follows. Catalyzes the transfer of a ribosyl phosphate group from 5-phosphoribose 1-diphosphate to orotate, leading to the formation of orotidine monophosphate (OMP). The sequence is that of Orotate phosphoribosyltransferase from Staphylococcus saprophyticus subsp. saprophyticus (strain ATCC 15305 / DSM 20229 / NCIMB 8711 / NCTC 7292 / S-41).